Reading from the N-terminus, the 118-residue chain is 5-hydroxyisourate hydrolase (118 aa).

3 residues coordinate substrate: H11, R51, and Y115.

The protein belongs to the transthyretin family. 5-hydroxyisourate hydrolase subfamily. Homotetramer.

Its subcellular location is the peroxisome. The enzyme catalyses 5-hydroxyisourate + H2O = 5-hydroxy-2-oxo-4-ureido-2,5-dihydro-1H-imidazole-5-carboxylate + H(+). The protein operates within purine metabolism; urate degradation; (S)-allantoin from urate: step 2/3. Functionally, catalyzes the hydrolysis of 5-hydroxyisourate (HIU) to 2-oxo-4-hydroxy-4-carboxy-5-ureidoimidazoline (OHCU). The sequence is that of 5-hydroxyisourate hydrolase (Urah) from Mus musculus (Mouse).